A 339-amino-acid polypeptide reads, in one-letter code: Ketol-acid reductoisomerase (NADP(+)) (339 aa).

One can recognise a KARI N-terminal Rossmann domain in the interval 1–182 (MRVYYDRDAD…GGGRAGIIET (182 aa)). NADP(+) contacts are provided by residues 24–27 (YGSQ), arginine 48, serine 51, serine 53, and 83–86 (DELQ). The active site involves histidine 108. Glycine 134 is a binding site for NADP(+). Residues 183-328 (TFKEECETDL…EKLREMMPWI (146 aa)) enclose the KARI C-terminal knotted domain. Residues aspartate 191, glutamate 195, glutamate 227, and glutamate 231 each coordinate Mg(2+). Serine 252 is a substrate binding site.

This sequence belongs to the ketol-acid reductoisomerase family. Mg(2+) is required as a cofactor.

The enzyme catalyses (2R)-2,3-dihydroxy-3-methylbutanoate + NADP(+) = (2S)-2-acetolactate + NADPH + H(+). The catalysed reaction is (2R,3R)-2,3-dihydroxy-3-methylpentanoate + NADP(+) = (S)-2-ethyl-2-hydroxy-3-oxobutanoate + NADPH + H(+). The protein operates within amino-acid biosynthesis; L-isoleucine biosynthesis; L-isoleucine from 2-oxobutanoate: step 2/4. It functions in the pathway amino-acid biosynthesis; L-valine biosynthesis; L-valine from pyruvate: step 2/4. Its function is as follows. Involved in the biosynthesis of branched-chain amino acids (BCAA). Catalyzes an alkyl-migration followed by a ketol-acid reduction of (S)-2-acetolactate (S2AL) to yield (R)-2,3-dihydroxy-isovalerate. In the isomerase reaction, S2AL is rearranged via a Mg-dependent methyl migration to produce 3-hydroxy-3-methyl-2-ketobutyrate (HMKB). In the reductase reaction, this 2-ketoacid undergoes a metal-dependent reduction by NADPH to yield (R)-2,3-dihydroxy-isovalerate. This is Ketol-acid reductoisomerase (NADP(+)) from Azorhizobium caulinodans (strain ATCC 43989 / DSM 5975 / JCM 20966 / LMG 6465 / NBRC 14845 / NCIMB 13405 / ORS 571).